We begin with the raw amino-acid sequence, 156 residues long: 3-hydroxyacyl-[acyl-carrier-protein] dehydratase FabZ (156 aa).

The active site involves His62.

The protein belongs to the thioester dehydratase family. FabZ subfamily.

It localises to the cytoplasm. The enzyme catalyses a (3R)-hydroxyacyl-[ACP] = a (2E)-enoyl-[ACP] + H2O. Involved in unsaturated fatty acids biosynthesis. Catalyzes the dehydration of short chain beta-hydroxyacyl-ACPs and long chain saturated and unsaturated beta-hydroxyacyl-ACPs. This Parasynechococcus marenigrum (strain WH8102) protein is 3-hydroxyacyl-[acyl-carrier-protein] dehydratase FabZ.